The following is a 174-amino-acid chain: Large ribosomal subunit protein uL10 (174 aa).

Belongs to the universal ribosomal protein uL10 family. As to quaternary structure, part of the ribosomal stalk of the 50S ribosomal subunit. The N-terminus interacts with L11 and the large rRNA to form the base of the stalk. The C-terminus forms an elongated spine to which L12 dimers bind in a sequential fashion forming a multimeric L10(L12)X complex.

Functionally, forms part of the ribosomal stalk, playing a central role in the interaction of the ribosome with GTP-bound translation factors. This is Large ribosomal subunit protein uL10 from Rubrobacter xylanophilus (strain DSM 9941 / JCM 11954 / NBRC 16129 / PRD-1).